Reading from the N-terminus, the 816-residue chain is Leucine--tRNA ligase (816 aa).

A 'HIGH' region motif is present at residues 40–51 (SYPSGSQLHAGH). The 'KMSKS' region signature appears at 576-580 (KMSKS). ATP is bound at residue K579.

It belongs to the class-I aminoacyl-tRNA synthetase family.

Its subcellular location is the cytoplasm. The catalysed reaction is tRNA(Leu) + L-leucine + ATP = L-leucyl-tRNA(Leu) + AMP + diphosphate. This is Leucine--tRNA ligase from Clostridium perfringens (strain ATCC 13124 / DSM 756 / JCM 1290 / NCIMB 6125 / NCTC 8237 / Type A).